Consider the following 215-residue polypeptide: Cytochrome b6 (215 aa).

The chain crosses the membrane as a helical span at residues I32–F52. Position 35 (C35) interacts with heme c. Heme b contacts are provided by H86 and H100. 3 helical membrane-spanning segments follow: residues A90–F110, L116–Y136, and L186–I206. 2 residues coordinate heme b: H187 and H202.

This sequence belongs to the cytochrome b family. PetB subfamily. The 4 large subunits of the cytochrome b6-f complex are cytochrome b6, subunit IV (17 kDa polypeptide, PetD), cytochrome f and the Rieske protein, while the 4 small subunits are PetG, PetL, PetM and PetN. The complex functions as a dimer. The cofactor is heme b. Heme c serves as cofactor.

The protein localises to the plastid. Its subcellular location is the chloroplast thylakoid membrane. Functionally, component of the cytochrome b6-f complex, which mediates electron transfer between photosystem II (PSII) and photosystem I (PSI), cyclic electron flow around PSI, and state transitions. This chain is Cytochrome b6, found in Nymphaea alba (White water-lily).